Consider the following 214-residue polypeptide: Transcription factor 23 (214 aa).

2 disordered regions span residues 1–86 (MSQR…ARER) and 174–214 (DSTT…LGDK). Positions 40–49 (TRQDPWEERS) are enriched in basic and acidic residues. The bHLH domain maps to 76–128 (EASPENAARERSRVRTLRQAFLALQAALPAVPPDTKLSKLDVLVLAASYIAHL). The segment covering 174–183 (DSTTASTPSQ) has biased composition (polar residues).

In terms of assembly, forms inactive heterodimeric complexes with TCF3. Expressed in liver, kidney and spleen.

It localises to the nucleus. In terms of biological role, inhibits E-box-mediated binding and transactivation of bHLH factors. Inhibitory effect is similar to that of ID proteins. Inhibits the formation of TCF3 and MYOD1 homodimers and heterodimers. Lacks DNA binding activity. Seems to play a role in the inhibition of myogenesis. The polypeptide is Transcription factor 23 (TCF23) (Homo sapiens (Human)).